Here is a 262-residue protein sequence, read N- to C-terminus: MPAVKVVERTPLFLKAVVEGAYPSLVNSLRRVIISELPVMAIDTVIVVNNTSVMYDEMLAHRLGLIPLTTPLQSLPPIEDCESGLADPSECTVRFTLQVNADGEVTVYSGDLVSERPDVVPVHKDIPIVKLVKGQSIVLEAYAKLGRARGHAKWQAALASYYYYPRVEVRDESCRERCREVCRDLTNPLECTFNKAMTCRDLCGDKLHVDWERNKYVFWVESFGNYDVDTALREAFRILKRKYSLFLDALARKSSSAAEAKL.

The protein belongs to the archaeal Rpo3/eukaryotic RPB3 RNA polymerase subunit family. In terms of assembly, part of the RNA polymerase complex.

It localises to the cytoplasm. The enzyme catalyses RNA(n) + a ribonucleoside 5'-triphosphate = RNA(n+1) + diphosphate. Functionally, DNA-dependent RNA polymerase (RNAP) catalyzes the transcription of DNA into RNA using the four ribonucleoside triphosphates as substrates. The chain is DNA-directed RNA polymerase subunit Rpo3 from Pyrobaculum neutrophilum (strain DSM 2338 / JCM 9278 / NBRC 100436 / V24Sta) (Thermoproteus neutrophilus).